The following is a 221-amino-acid chain: CASP-like protein 4B1 (221 aa).

The segment at 1 to 78 (MAMQLHAASP…HDHHGGGGGG (78 aa)) is disordered. Over 1-87 (MAMQLHAASP…GDEATQLLNG (87 aa)) the chain is Cytoplasmic. Over residues 19–33 (SPPPPPPLSPHPEPA) the composition is skewed to pro residues. A compositionally biased stretch (low complexity) spans 50-62 (APVATATTPLTPG). Residues 88 to 108 (IVLVLRAGAALLSFVAMALVA) form a helical membrane-spanning segment. Residues 109-125 (SCRHGDWMDFLRYQEYR) lie on the Extracellular side of the membrane. The helical transmembrane segment at 126-146 (YLLGVSVVAFVYSAAQALKNF) threads the bilayer. Residues 147–160 (RRRRRGAADASFLD) lie on the Cytoplasmic side of the membrane. Residues 161–181 (FAGDQAVAYLLVTASAAALPI) form a helical membrane-spanning segment. Residues 182-196 (TIRMRSAVVNVFTDA) lie on the Extracellular side of the membrane. Residues 197-217 (IAASIALGFLAFAALALSAML) traverse the membrane as a helical segment. Residues 218-221 (SRHA) are Cytoplasmic-facing.

It belongs to the Casparian strip membrane proteins (CASP) family. As to quaternary structure, homodimer and heterodimers.

The protein resides in the cell membrane. The chain is CASP-like protein 4B1 from Hordeum vulgare subsp. vulgare (Domesticated barley).